The following is a 177-amino-acid chain: MTTIVSVRRNGQVVIGGDGQVSLGNTVMKGNARKVHRLYNGKVLAGFAGGTADAFTLLERFEAKLQAHQGNLERAAVALAKDWRTDRALRRLEALLAVADEHKSFIITGNGDVVQPEQDLIAIGSGGNFAQSAAIALLENTELDAKTIVEKSLKIAGDICVFTNGNHTIEVLDYSAK.

The active site involves Thr-2. The Na(+) site is built by Gly-157, Cys-160, and Thr-163.

This sequence belongs to the peptidase T1B family. HslV subfamily. A double ring-shaped homohexamer of HslV is capped on each side by a ring-shaped HslU homohexamer. The assembly of the HslU/HslV complex is dependent on binding of ATP.

It is found in the cytoplasm. It catalyses the reaction ATP-dependent cleavage of peptide bonds with broad specificity.. Its activity is regulated as follows. Allosterically activated by HslU binding. In terms of biological role, protease subunit of a proteasome-like degradation complex believed to be a general protein degrading machinery. The chain is ATP-dependent protease subunit HslV from Aeromonas salmonicida (strain A449).